The sequence spans 215 residues: Small ribosomal subunit protein uS3 (215 aa).

The 69-residue stretch at 38-106 folds into the KH type-2 domain; that stretch reads LRAFLKKKLF…EVLIDIQEIR (69 aa).

The protein belongs to the universal ribosomal protein uS3 family. In terms of assembly, part of the 30S ribosomal subunit. Forms a tight complex with proteins S10 and S14.

In terms of biological role, binds the lower part of the 30S subunit head. Binds mRNA in the 70S ribosome, positioning it for translation. The protein is Small ribosomal subunit protein uS3 of Desulforapulum autotrophicum (strain ATCC 43914 / DSM 3382 / VKM B-1955 / HRM2) (Desulfobacterium autotrophicum).